A 94-amino-acid chain; its full sequence is Putative pterin-4-alpha-carbinolamine dehydratase (94 aa).

This sequence belongs to the pterin-4-alpha-carbinolamine dehydratase family.

It carries out the reaction (4aS,6R)-4a-hydroxy-L-erythro-5,6,7,8-tetrahydrobiopterin = (6R)-L-erythro-6,7-dihydrobiopterin + H2O. The protein is Putative pterin-4-alpha-carbinolamine dehydratase of Koribacter versatilis (strain Ellin345).